A 233-amino-acid chain; its full sequence is tRNA (guanine-N(7)-)-methyltransferase (233 aa).

The tract at residues 1 to 21 (MTEESHPLRGAGNFFGRRHGK) is disordered. The S-adenosyl-L-methionine site is built by Glu-64, Glu-89, Asp-116, and Asp-138. Asp-138 is a catalytic residue. Substrate-binding positions include Lys-142, Asp-174, and 212–215 (TRYE).

Belongs to the class I-like SAM-binding methyltransferase superfamily. TrmB family.

It catalyses the reaction guanosine(46) in tRNA + S-adenosyl-L-methionine = N(7)-methylguanosine(46) in tRNA + S-adenosyl-L-homocysteine. It functions in the pathway tRNA modification; N(7)-methylguanine-tRNA biosynthesis. Its function is as follows. Catalyzes the formation of N(7)-methylguanine at position 46 (m7G46) in tRNA. This Brucella anthropi (strain ATCC 49188 / DSM 6882 / CCUG 24695 / JCM 21032 / LMG 3331 / NBRC 15819 / NCTC 12168 / Alc 37) (Ochrobactrum anthropi) protein is tRNA (guanine-N(7)-)-methyltransferase.